A 300-amino-acid polypeptide reads, in one-letter code: Alpha-ketoglutarate-dependent dioxygenase alkB homolog 4 (300 aa).

Residue alanine 2 is modified to N-acetylalanine. Residues 148–272 form the Fe2OG dioxygenase domain; sequence PVEQCNLDYS…RVCATFRELS (125 aa). 3 residues coordinate Fe cation: histidine 167, aspartate 169, and histidine 252. Position 263 (arginine 263) interacts with 2-oxoglutarate.

The protein belongs to the alkB family. Interacts with ZFHX3, MLLT3, MLLT1, HSF4, EP300, TES, EIF3C, MTMR6 and PSMA6. Fe(2+) serves as cofactor.

It localises to the cytoplasm. It is found in the nucleus. Its subcellular location is the nucleolus. The protein localises to the midbody. The catalysed reaction is an N(6)-methyl-2'-deoxyadenosine in DNA + 2-oxoglutarate + O2 = a 2'-deoxyadenosine in DNA + formaldehyde + succinate + CO2. It catalyses the reaction N(6)-methyl-L-lysyl-[protein] + 2-oxoglutarate + O2 = L-lysyl-[protein] + formaldehyde + succinate + CO2. Its function is as follows. Dioxygenase that mediates demethylation of actin monomethylated at 'Lys-84' (K84me1), thereby acting as a regulator of actomyosin-processes. Demethylation of actin K84me1 is required for maintaining actomyosin dynamics supporting normal cleavage furrow ingression during cytokinesis and cell migration. In addition to proteins, also demethylates DNA: specifically demethylates DNA methylated on the 6th position of adenine (N(6)-methyladenosine) DNA, thereby regulating Polycomb silencing. The chain is Alpha-ketoglutarate-dependent dioxygenase alkB homolog 4 from Mus musculus (Mouse).